Here is a 190-residue protein sequence, read N- to C-terminus: Peptidyl-tRNA hydrolase (190 aa).

Tyrosine 14 serves as a coordination point for tRNA. Catalysis depends on histidine 19, which acts as the Proton acceptor. The tRNA site is built by tyrosine 64, asparagine 66, and asparagine 112.

The protein belongs to the PTH family. As to quaternary structure, monomer.

It is found in the cytoplasm. It carries out the reaction an N-acyl-L-alpha-aminoacyl-tRNA + H2O = an N-acyl-L-amino acid + a tRNA + H(+). Its function is as follows. Hydrolyzes ribosome-free peptidyl-tRNAs (with 1 or more amino acids incorporated), which drop off the ribosome during protein synthesis, or as a result of ribosome stalling. In terms of biological role, catalyzes the release of premature peptidyl moieties from peptidyl-tRNA molecules trapped in stalled 50S ribosomal subunits, and thus maintains levels of free tRNAs and 50S ribosomes. The polypeptide is Peptidyl-tRNA hydrolase (Chlorobium phaeobacteroides (strain DSM 266 / SMG 266 / 2430)).